The sequence spans 523 residues: Coatomer subunit delta-2 (523 aa).

Residues 218–243 (DSFASKPKGRPSAAATAPGKGLGMKL) are disordered. One can recognise an MHD domain in the interval 282 to 523 (SDPVTVTIEE…RLVTANYQVV (242 aa)).

Belongs to the adaptor complexes medium subunit family. Delta-COP subfamily. Oligomeric complex that consists of at least the alpha, beta, beta', gamma, delta, epsilon and zeta subunits.

It localises to the cytoplasm. The protein localises to the golgi apparatus membrane. The protein resides in the cytoplasmic vesicle. Its subcellular location is the COPI-coated vesicle membrane. Functionally, the coatomer is a cytosolic protein complex that binds to dilysine motifs and reversibly associates with Golgi non-clathrin-coated vesicles, which further mediate biosynthetic protein transport from the ER, via the Golgi up to the trans Golgi network. Coatomer complex is required for budding from Golgi membranes, and is essential for the retrograde Golgi-to-ER transport of dilysine-tagged proteins. This Oryza sativa subsp. japonica (Rice) protein is Coatomer subunit delta-2.